A 264-amino-acid polypeptide reads, in one-letter code: Thiazole synthase (264 aa).

Lysine 106 functions as the Schiff-base intermediate with DXP in the catalytic mechanism. 1-deoxy-D-xylulose 5-phosphate is bound by residues glycine 167, 193–194, and 215–216; these read AG and NS.

The protein belongs to the ThiG family. Homotetramer. Forms heterodimers with either ThiH or ThiS.

Its subcellular location is the cytoplasm. It carries out the reaction [ThiS sulfur-carrier protein]-C-terminal-Gly-aminoethanethioate + 2-iminoacetate + 1-deoxy-D-xylulose 5-phosphate = [ThiS sulfur-carrier protein]-C-terminal Gly-Gly + 2-[(2R,5Z)-2-carboxy-4-methylthiazol-5(2H)-ylidene]ethyl phosphate + 2 H2O + H(+). It functions in the pathway cofactor biosynthesis; thiamine diphosphate biosynthesis. Catalyzes the rearrangement of 1-deoxy-D-xylulose 5-phosphate (DXP) to produce the thiazole phosphate moiety of thiamine. Sulfur is provided by the thiocarboxylate moiety of the carrier protein ThiS. In vitro, sulfur can be provided by H(2)S. This Pseudomonas fluorescens (strain Pf0-1) protein is Thiazole synthase.